Here is a 210-residue protein sequence, read N- to C-terminus: NDR1/HIN1-like protein 12 (210 aa).

A helical transmembrane segment spans residues 23–43 (GVIIGFIIIVLITIFLVWIIL). N61 carries N-linked (GlcNAc...) asparagine glycosylation.

As to quaternary structure, may form oligomers or be a component of larger protein complex in plasma membranes. As to expression, expressed in leaves, stems and flowers, and, to a lower extent, in siliques and roots.

The protein resides in the cell membrane. Functionally, may play a role in plant immunity. The sequence is that of NDR1/HIN1-like protein 12 from Arabidopsis thaliana (Mouse-ear cress).